The primary structure comprises 144 residues: Interleukin-9 (144 aa).

A signal peptide spans methionine 1–glycine 18. Glutamine 19 carries the pyrrolidone carboxylic acid modification. Residues asparagine 50, asparagine 63, asparagine 78, and asparagine 114 are each glycosylated (N-linked (GlcNAc...) asparagine).

Belongs to the IL-7/IL-9 family. Interacts with IL9R. Interacts with IL2RG.

The protein localises to the secreted. Multifunctional cytokine secreted mainly by T-helper 2 lymphocytes and also mast cells or NKT cells that plays important roles in the immune response against parasites. Affects intestinal epithelial permeability and adaptive immunity. In addition, induces the differentiation of specific T-cell subsets such as IL-17 producing helper T-cells (TH17) and also proliferation and differentiation of mast cells. Mechanistically, exerts its biological effects through a receptor composed of IL9R subunit and a signal transducing subunit IL2RG. Receptor stimulation results in the rapid activation of JAK1 and JAK3 kinase activities leading to STAT1, STAT3 and STAT5-mediated transcriptional programs. Induction of differentiation genes seems to be mediated by STAT1 alone, while protection of cells from apoptosis depends on STAT3 and STAT5. The sequence is that of Interleukin-9 (IL9) from Homo sapiens (Human).